A 213-amino-acid polypeptide reads, in one-letter code: Thiopurine S-methyltransferase (213 aa).

S-adenosyl-L-methionine-binding residues include Trp10, Leu45, Glu66, and Arg121.

The protein belongs to the class I-like SAM-binding methyltransferase superfamily. TPMT family.

Its subcellular location is the cytoplasm. It catalyses the reaction S-adenosyl-L-methionine + a thiopurine = S-adenosyl-L-homocysteine + a thiopurine S-methylether.. In Aliivibrio fischeri (strain MJ11) (Vibrio fischeri), this protein is Thiopurine S-methyltransferase.